The primary structure comprises 233 residues: Inner kinetochore subunit fta4 (233 aa).

Residues Thr189 and Thr191 each carry the phosphothreonine modification.

The protein belongs to the NKP1 family. Component of the inner kinetochore constitutive centromere-associated network (CCAN) (also known as central kinetochore Sim4 complex in fission yeast), which is composed of at least cnl2, cnp3, cnp20, fta1, fta2, fta3, fta4, fta6, fta7, mal2, mhf1, mhf2, mis6, mis15, mis17, sim4 and wip1.

The protein resides in the nucleus. The protein localises to the chromosome. Its subcellular location is the centromere. It localises to the kinetochore. In terms of biological role, component of the kinetochore, a multiprotein complex that assembles on centromeric DNA and attaches chromosomes to spindle microtubules, mediating chromosome segregation and sister chromatid segregation during meiosis and mitosis. Component of the inner kinetochore constitutive centromere-associated network (CCAN), which serves as a structural platform for outer kinetochore assembly. Fta2, fta3 and fta4 associate with the central core (cnt) and inner repeat (inr) region of the centromere. This chain is Inner kinetochore subunit fta4 (fta4), found in Schizosaccharomyces pombe (strain 972 / ATCC 24843) (Fission yeast).